The primary structure comprises 408 residues: LL-diaminopimelate aminotransferase (408 aa).

Substrate-binding residues include Tyr15 and Gly42. Pyridoxal 5'-phosphate is bound by residues Tyr72, 108-109, Tyr132, Asn187, Tyr218, and 246-248; these read SK and SFS. Positions 109, 132, and 187 each coordinate substrate. Lys249 carries the post-translational modification N6-(pyridoxal phosphate)lysine. Arg257 and Asn292 together coordinate pyridoxal 5'-phosphate. Substrate contacts are provided by Asn292 and Arg388.

Belongs to the class-I pyridoxal-phosphate-dependent aminotransferase family. LL-diaminopimelate aminotransferase subfamily. As to quaternary structure, homodimer. It depends on pyridoxal 5'-phosphate as a cofactor.

The enzyme catalyses (2S,6S)-2,6-diaminopimelate + 2-oxoglutarate = (S)-2,3,4,5-tetrahydrodipicolinate + L-glutamate + H2O + H(+). It participates in amino-acid biosynthesis; L-lysine biosynthesis via DAP pathway; LL-2,6-diaminopimelate from (S)-tetrahydrodipicolinate (aminotransferase route): step 1/1. Functionally, involved in the synthesis of meso-diaminopimelate (m-DAP or DL-DAP), required for both lysine and peptidoglycan biosynthesis. Catalyzes the direct conversion of tetrahydrodipicolinate to LL-diaminopimelate. Is also able to catalyze the reverse reaction in vitro, i.e. the transamination of LL-diaminopimelate with 2-oxoglutarate to produce tetrahydrodipicolinate and glutamate. Cannot use m-DAP, lysine or ornithine as the amino-group donor, when using 2-oxoglutarate as the amino-group acceptor. Cannot use pyruvate, indole 3-pyruvate, oxaloacetate or phenyl pyruvate as the amino-group acceptor, when using LL-DAP as the amino-group donor. The protein is LL-diaminopimelate aminotransferase of Leptospira interrogans serogroup Icterohaemorrhagiae serovar copenhageni (strain Fiocruz L1-130).